The chain runs to 822 residues: Anaphase-promoting complex subunit 2 (822 aa).

5 positions are modified to phosphoserine: Ser-218, Ser-314, Ser-470, Ser-534, and Ser-697. The tract at residues 450–495 (GDLAVELSKTDPASLETGQDSEDDSGEPEDWVPDPVDADPGKSSSK) is disordered. The segment covering 468–481 (QDSEDDSGEPEDWV) has biased composition (acidic residues). The interval 502 to 700 (ISLLVSIYGS…LLRRRMSVWL (199 aa)) is cullin homology. Tyr-810 is modified (phosphotyrosine).

The protein belongs to the cullin family. In terms of assembly, the mammalian APC/C is composed at least of 14 distinct subunits ANAPC1, ANAPC2, CDC27/APC3, ANAPC4, ANAPC5, CDC16/APC6, ANAPC7, CDC23/APC8, ANAPC10, ANAPC11, CDC26/APC12, ANAPC13, ANAPC15 and ANAPC16 that assemble into a complex of at least 19 chains with a combined molecular mass of around 1.2 MDa; APC/C interacts with FZR1 and FBXO5. In the context of the APC/C complex, directly interacts with UBE2C and UBE2S. Interacts (via cullin domain) with ANAPC11 and with UBCH10. Interacts with NEUROD2. Interacts with FBXO43; the interaction is direct.

The protein operates within protein modification; protein ubiquitination. Functionally, together with the RING-H2 protein ANAPC11, constitutes the catalytic component of the anaphase promoting complex/cyclosome (APC/C), a cell cycle-regulated E3 ubiquitin ligase that controls progression through mitosis and the G1 phase of the cell cycle. The APC/C complex acts by mediating ubiquitination and subsequent degradation of target proteins: it mainly mediates the formation of 'Lys-11'-linked polyubiquitin chains and, to a lower extent, the formation of 'Lys-48'- and 'Lys-63'-linked polyubiquitin chains. The APC/C complex catalyzes assembly of branched 'Lys-11'-/'Lys-48'-linked branched ubiquitin chains on target proteins. The CDC20-APC/C complex positively regulates the formation of synaptic vesicle clustering at active zone to the presynaptic membrane in postmitotic neurons. CDC20-APC/C-induced degradation of NEUROD2 drives presynaptic differentiation. The chain is Anaphase-promoting complex subunit 2 (ANAPC2) from Homo sapiens (Human).